Consider the following 374-residue polypeptide: Type IV secretion system protein PtlG homolog (374 aa).

Residues 38–56 (WMFALVAVALSCLLATGIW) form a helical membrane-spanning segment. The disordered stretch occupies residues 86 to 117 (HPREPEPAPLPDMPAAPDPILPQPRPAPPVPP). A compositionally biased stretch (pro residues) spans 92 to 117 (PAPLPDMPAAPDPILPQPRPAPPVPP).

Belongs to the TrbI/VirB10 family.

The protein resides in the cell membrane. The sequence is that of Type IV secretion system protein PtlG homolog (ptlG) from Bordetella bronchiseptica (strain ATCC BAA-588 / NCTC 13252 / RB50) (Alcaligenes bronchisepticus).